The following is a 528-amino-acid chain: Adhesion G-protein coupled receptor G5 (528 aa).

The N-terminal stretch at 1–21 is a signal peptide; the sequence is MDHCGALFLCLCLLTLQNATT. Over 22-245 the chain is Extracellular; sequence ETWEELLSYM…SPALVPAELL (224 aa). N-linked (GlcNAc...) asparagine glycans are attached at residues N58, N65, N146, N147, N173, and N179. Positions 78–239 constitute a GAIN-B domain; that stretch reads FKLSCDFSGL…AVLMQLSPAL (162 aa). Intrachain disulfides connect C189–C221 and C209–C223. A GPS region spans residues 189-239; sequence CVFWKEGARKQPWGGWSPEGCRTEQPSHSQVLCRCNHLTYFAVLMQLSPAL. Positions 228-236 are stachel; the sequence is YFAVLMQLS. The chain crosses the membrane as a helical span at residues 246–271; the sequence is APLTYISLVGCSISIVASLITVLLHF. The Cytoplasmic segment spans residues 272-280; that stretch reads HFRKQSDSL. A helical membrane pass occupies residues 281-304; it reads TRIHMNLHASVLLLNIAFLLSPAF. The Extracellular segment spans residues 305 to 314; it reads AMSPVPGSAC. Residues C314 and C404 are joined by a disulfide bond. The helical transmembrane segment at 315–340 threads the bilayer; that stretch reads TALAAALHYALLSCLTWMAIEGFNLY. Residues 341–353 are Cytoplasmic-facing; sequence LLLGRVYNIYIRR. The helical transmembrane segment at 354–377 threads the bilayer; that stretch reads YVFKLGVLGWGAPALLVLLSLSVK. Over 378–410 the chain is Extracellular; the sequence is SSVYGPCTIPVFDSWENGTGFQNMSICWVRSPV. N-linked (GlcNAc...) asparagine glycans are attached at residues N394 and N400. A helical membrane pass occupies residues 411-435; sequence VHSVLVMGYGGLTSLFNLVVLAWAL. Residues 436–455 are Cytoplasmic-facing; sequence WTLRRLRERADAPSVRACHD. Residues 456-477 traverse the membrane as a helical segment; sequence TVTVLGLTVLLGTTWALAFFSF. The Extracellular portion of the chain corresponds to 478 to 481; that stretch reads GVFL. The helical transmembrane segment at 482–505 threads the bilayer; the sequence is LPQLFLFTILNSLYGFFLFLWFCS. Residues 506–528 are Cytoplasmic-facing; that stretch reads QRCRSEAEAKAQIEAFSSSQTTQ.

This sequence belongs to the G-protein coupled receptor 2 family. Adhesion G-protein coupled receptor (ADGR) subfamily. As to quaternary structure, heterodimer of 2 chains generated by proteolytic processing; the large extracellular N-terminal fragment and the membrane-bound C-terminal fragment predominantly remain associated and non-covalently linked. Autoproteolytically processed at the GPS region of the GAIN-B domain; this cleavage modulates receptor activity. Post-translationally, N-glycsylated. Expressed in immune cells. Primarily found in granulocytes. Found in eosinophils.

Its subcellular location is the cell membrane. With respect to regulation, forms a heterodimer of 2 chains generated by proteolytic processing that remain associated through non-covalent interactions mediated by the GAIN-B domain. In the inactivated receptor, the Stachel sequence (also named stalk) is embedded in the GAIN-B domain, where it adopts a beta-strand conformation. On activation, the Stachel moves into the 7 transmembrane region and adopts a twisted hook-shaped configuration that forms contacts within the receptor, leading to coupling of a G-alpha protein, which activates signaling. The cleaved GAIN-B and N-terminal domains can then dissociate from the rest of the receptor. Orphan adhesion G-protein coupled receptor (aGPCR). Ligand binding causes a conformation change that triggers signaling via guanine nucleotide-binding proteins (G proteins) and modulates the activity of downstream effectors, such as adenylate cyclase. ADGRG5 is specifically coupled to G(s) G proteins and mediates activation of adenylate cyclase activity. This is Adhesion G-protein coupled receptor G5 from Homo sapiens (Human).